The sequence spans 374 residues: WAT1-related protein At2g39510 (374 aa).

10 helical membrane passes run 9-29 (FITV…AKFA), 38-58 (VLAS…AYFL), 64-84 (PKMT…EPTI), 99-119 (TFTA…AWIF), 135-155 (ILGT…KGPL), 182-202 (GASL…LQAI), 212-232 (SLTA…ALFI), 249-269 (LAAV…QGVI), 284-304 (LSMV…MFLG), and 306-326 (ILGA…KSKD). 2 consecutive EamA domains span residues 19–147 (YAGL…GAML) and 191–320 (ICWA…YSVL). Residues 350–374 (SKANAKMDTNDASVVISRPNTNESV) form a disordered region.

This sequence belongs to the drug/metabolite transporter (DMT) superfamily. Plant drug/metabolite exporter (P-DME) (TC 2.A.7.4) family.

It localises to the membrane. The protein is WAT1-related protein At2g39510 of Arabidopsis thaliana (Mouse-ear cress).